Reading from the N-terminus, the 456-residue chain is GTPase Der (456 aa).

EngA-type G domains are found at residues 4–169 (PVVA…PSKD) and 178–353 (VQLA…DQSR). GTP is bound by residues 10-17 (GRPNVGKS), 57-61 (DTGGL), 120-123 (NKCE), 184-191 (GRPNVGKS), 231-235 (DTAGI), and 296-299 (NKWD). The KH-like domain maps to 354–439 (RRVTTSVVNE…PIKLFWRGKQ (86 aa)).

This sequence belongs to the TRAFAC class TrmE-Era-EngA-EngB-Septin-like GTPase superfamily. EngA (Der) GTPase family. As to quaternary structure, associates with the 50S ribosomal subunit.

Its function is as follows. GTPase that plays an essential role in the late steps of ribosome biogenesis. This Prochlorococcus marinus (strain NATL2A) protein is GTPase Der.